The primary structure comprises 439 residues: Probable RNA-binding protein 23 (439 aa).

Residues 13–159 form a disordered region; the sequence is MLEAPYKKEE…PVREPVDNLS (147 aa). Basic and acidic residues predominate over residues 17–34; it reads PYKKEEDEQQRKEVKKDY. Residues 36-57 are compositionally biased toward low complexity; that stretch reads SNTTSSTSNSGNETSGSSTIGE. Over residues 60-90 the composition is skewed to basic residues; sequence KKKRSRSHNKSRDRKRSRSRDRDRYRRRNSR. Residues 103–125 are compositionally biased toward basic and acidic residues; that stretch reads RSWDRRHGSESRSRDHRREDRVH. Phosphoserine occurs at positions 128 and 149. Residues 144–159 are compositionally biased toward basic and acidic residues; that stretch reads HFREKSPVREPVDNLS. 2 RRM domains span residues 166 to 243 and 263 to 341; these read RTVF…ASQA and MRLY…HVTE.

This sequence belongs to the splicing factor SR family. In terms of processing, aryl sulfonamide anticancer drugs, such as indisulam (E7070) or E7820, promote ubiquitination and subsequent degradation by the DCX(DCAF15) complex. Aryl sulfonamide anticancer drugs change the substrate specificity of DCAF15 by acting as a molecular glue that promotes binding between DCAF15 and weak affinity interactor RBM23. In terms of tissue distribution, highly expressed in placenta, liver, skeletal muscle, heart and kidney. Expressed at lower levels in the colon, thymus, spleen, small intestine and lung.

Its subcellular location is the nucleus. Functionally, RNA-binding protein that acts both as a transcription coactivator and pre-mRNA splicing factor. Regulates steroid hormone receptor-mediated transcription, independently of the pre-mRNA splicing factor activity. This chain is Probable RNA-binding protein 23, found in Homo sapiens (Human).